Consider the following 80-residue polypeptide: Exodeoxyribonuclease 7 small subunit (80 aa).

Belongs to the XseB family. As to quaternary structure, heterooligomer composed of large and small subunits.

The protein localises to the cytoplasm. It carries out the reaction Exonucleolytic cleavage in either 5'- to 3'- or 3'- to 5'-direction to yield nucleoside 5'-phosphates.. Its function is as follows. Bidirectionally degrades single-stranded DNA into large acid-insoluble oligonucleotides, which are then degraded further into small acid-soluble oligonucleotides. This chain is Exodeoxyribonuclease 7 small subunit, found in Rickettsia conorii (strain ATCC VR-613 / Malish 7).